Reading from the N-terminus, the 262-residue chain is Tryptophan synthase alpha chain (262 aa).

Active-site proton acceptor residues include Glu49 and Asp60.

Belongs to the TrpA family. In terms of assembly, tetramer of two alpha and two beta chains.

It catalyses the reaction (1S,2R)-1-C-(indol-3-yl)glycerol 3-phosphate + L-serine = D-glyceraldehyde 3-phosphate + L-tryptophan + H2O. It functions in the pathway amino-acid biosynthesis; L-tryptophan biosynthesis; L-tryptophan from chorismate: step 5/5. Its function is as follows. The alpha subunit is responsible for the aldol cleavage of indoleglycerol phosphate to indole and glyceraldehyde 3-phosphate. The chain is Tryptophan synthase alpha chain from Thermoanaerobacter sp. (strain X514).